We begin with the raw amino-acid sequence, 536 residues long: Phosphoenolpyruvate carboxykinase (ATP) (536 aa).

Residues R61, Y195, and K201 each contribute to the substrate site. ATP contacts are provided by residues K201, H220, and 236 to 244 (GLSGTGKTT). K201 and H220 together coordinate Mn(2+). D257 is a binding site for Mn(2+). Residues E285, R322, and T447 each contribute to the ATP site. R322 serves as a coordination point for substrate.

The protein belongs to the phosphoenolpyruvate carboxykinase (ATP) family. It depends on Mn(2+) as a cofactor.

The protein resides in the cytoplasm. The enzyme catalyses oxaloacetate + ATP = phosphoenolpyruvate + ADP + CO2. The protein operates within carbohydrate biosynthesis; gluconeogenesis. In terms of biological role, involved in the gluconeogenesis. Catalyzes the conversion of oxaloacetate (OAA) to phosphoenolpyruvate (PEP) through direct phosphoryl transfer between the nucleoside triphosphate and OAA. The sequence is that of Phosphoenolpyruvate carboxykinase (ATP) from Chelativorans sp. (strain BNC1).